The chain runs to 301 residues: Probable enoyl-CoA hydratase 2, mitochondrial (301 aa).

The transit peptide at 1-32 (MSFVKYLRRDNLLQLAGKPSLSRNYILQTCRT) directs the protein to the mitochondrion. Substrate is bound by residues 105 to 109 (AGADL) and G152.

The protein belongs to the enoyl-CoA hydratase/isomerase family.

It localises to the mitochondrion. The enzyme catalyses a (3S)-3-hydroxyacyl-CoA = a (2E)-enoyl-CoA + H2O. It catalyses the reaction a 4-saturated-(3S)-3-hydroxyacyl-CoA = a (3E)-enoyl-CoA + H2O. The protein operates within lipid metabolism; fatty acid beta-oxidation. In terms of biological role, straight-chain enoyl-CoA thioesters from C4 up to at least C16 are processed, although with decreasing catalytic rate. In Arabidopsis thaliana (Mouse-ear cress), this protein is Probable enoyl-CoA hydratase 2, mitochondrial.